Here is a 900-residue protein sequence, read N- to C-terminus: Polycomb protein Su(z)12 (900 aa).

The segment covering 1-12 has biased composition (basic and acidic residues); that stretch reads MAPAKKREKDSN. The disordered stretch occupies residues 1-44; sequence MAPAKKREKDSNPDGSAANGIIGLTHGAPDASNAGSTVPPTAEG. A C2H2-type zinc finger spans residues 411–434; sequence LNCPWCGLDCLRLYALLKHLKLCH. The segment at 527 to 603 is VEFS-box; sequence RLYHHTETCL…CQLPIACEMF (77 aa). A Phosphoserine modification is found at Ser547. The segment at 678 to 900 is disordered; it reads KQEDPKTLKS…LSVPAKYERR (223 aa). 2 stretches are compositionally biased toward low complexity: residues 698-714 and 738-757; these read ASTS…GSSS and SKGT…NSKN. Residues 773 to 782 are compositionally biased toward basic and acidic residues; the sequence is TRERRSEYGQ. Residues 820 to 834 show a composition bias toward gly residues; that stretch reads PGTGIGNGHGGGSGS. Over residues 850–862 the composition is skewed to low complexity; the sequence is SNNASSSSSNSKR.

The protein belongs to the VEFS (VRN2-EMF2-FIS2-SU(Z)12) family. In terms of assembly, component of the polycomb repressive complex 2 (PRC2, also known as the Esc/E(Z) complex), composed of Caf1-55, esc, E(z), Su(z)12, and possibly pho. PRC2 associates with the accessory components Jarid2 and jing to form the PRC2 Jarid2-jing variant (PRC2.2). PRC2 may also associate with Pcl and HDAC1/Rpd3 during early embryogenesis. This complex is distinct from the PRC1 complex, which contains many other PcG proteins like Pc, Ph, Psc, Su(z)2. The two complexes however cooperate and interact together during the first 3 hours of development to establish PcG silencing.

The protein localises to the nucleus. Its subcellular location is the chromosome. In terms of biological role, polycomb group (PcG) protein. While PcG proteins are generally required to maintain the transcriptionally repressive state of homeotic genes throughout development, this protein is specifically required during the first 6 hours of embryogenesis to establish the repressed state. Component of the Esc/E(z) complex, which methylates 'Lys-9' (H3K9me) and 'Lys-27' (H3K27me) of histone H3, leading to transcriptional repression of the affected target gene. The Esc/E(z) complex is necessary but not sufficient for the repression of homeotic target genes, suggesting that the recruitment of the distinct PRC1 complex is also required. This chain is Polycomb protein Su(z)12 (Su(z)12), found in Drosophila melanogaster (Fruit fly).